The primary structure comprises 314 residues: MITCLRNWPLLLKRFSVHQIHQFTQLSGRFERPPQSGKSSRDPYLVTVVQGRSKKPRFPGERSNQRFGEDSWFVSSTPLAEVMGVADGVGGWRDLGVDAGRFAKELMSCCSGQTQLSDFDGRSPRNMLIAGFQELSHREHPVVGSSTACLATMHRKDCTLYTANLGDSGFLVVRNGRVLHRSVEQTHDFNTPYQLTVPPEDRKESYYCDKPEMAVSTRHSLLPGDLVLLATDGLFDNMPESMLLSILNGLKERGEHDLLVGASRVVEKARELSMNASFQSPFAIKARQHNVSYSGGGKPDDITLILSSVEVPNA.

Residues 43–309 (PYLVTVVQGR…DDITLILSSV (267 aa)) form the PPM-type phosphatase domain. Mn(2+) contacts are provided by Asp-87, Gly-88, and Asp-232.

This sequence belongs to the PP2C family. Requires Mg(2+) as cofactor. It depends on Mn(2+) as a cofactor.

The catalysed reaction is O-phospho-L-seryl-[protein] + H2O = L-seryl-[protein] + phosphate. It catalyses the reaction O-phospho-L-threonyl-[protein] + H2O = L-threonyl-[protein] + phosphate. This Drosophila melanogaster (Fruit fly) protein is Protein phosphatase PTC7 homolog fig.